A 374-amino-acid chain; its full sequence is Chaperone protein DnaJ (374 aa).

The 66-residue stretch at 5-70 (DYYEILGVSR…QKRAAYDQYG (66 aa)) folds into the J domain. A CR-type zinc finger spans residues 129 to 207 (GVTREIRIPT…CHGHGRVEKS (79 aa)). 8 residues coordinate Zn(2+): C142, C145, C159, C162, C181, C184, C195, and C198. 4 CXXCXGXG motif repeats span residues 142-149 (CDVCHGSG), 159-166 (CPTCHGQG), 181-188 (CPTCQGQG), and 195-202 (CTKCHGHG).

It belongs to the DnaJ family. In terms of assembly, homodimer. The cofactor is Zn(2+).

Its subcellular location is the cytoplasm. Functionally, participates actively in the response to hyperosmotic and heat shock by preventing the aggregation of stress-denatured proteins and by disaggregating proteins, also in an autonomous, DnaK-independent fashion. Unfolded proteins bind initially to DnaJ; upon interaction with the DnaJ-bound protein, DnaK hydrolyzes its bound ATP, resulting in the formation of a stable complex. GrpE releases ADP from DnaK; ATP binding to DnaK triggers the release of the substrate protein, thus completing the reaction cycle. Several rounds of ATP-dependent interactions between DnaJ, DnaK and GrpE are required for fully efficient folding. Also involved, together with DnaK and GrpE, in the DNA replication of plasmids through activation of initiation proteins. In Sodalis glossinidius (strain morsitans), this protein is Chaperone protein DnaJ.